We begin with the raw amino-acid sequence, 205 residues long: Methylthioribulose-1-phosphate dehydratase (205 aa).

The Zn(2+) site is built by His-96 and His-98.

This sequence belongs to the aldolase class II family. MtnB subfamily. Zn(2+) is required as a cofactor.

The enzyme catalyses 5-(methylsulfanyl)-D-ribulose 1-phosphate = 5-methylsulfanyl-2,3-dioxopentyl phosphate + H2O. It participates in amino-acid biosynthesis; L-methionine biosynthesis via salvage pathway; L-methionine from S-methyl-5-thio-alpha-D-ribose 1-phosphate: step 2/6. Catalyzes the dehydration of methylthioribulose-1-phosphate (MTRu-1-P) into 2,3-diketo-5-methylthiopentyl-1-phosphate (DK-MTP-1-P). This chain is Methylthioribulose-1-phosphate dehydratase, found in Pseudomonas aeruginosa (strain ATCC 15692 / DSM 22644 / CIP 104116 / JCM 14847 / LMG 12228 / 1C / PRS 101 / PAO1).